We begin with the raw amino-acid sequence, 109 residues long: Elongation factor G, chloroplastic (109 aa).

Belongs to the GTP-binding elongation factor family. EF-G/EF-2 subfamily.

It localises to the plastid. The protein localises to the chloroplast. The protein operates within protein biosynthesis; polypeptide chain elongation. Chloroplast-localized elongation factor EF-G involved in protein synthesis in plastids. Catalyzes the GTP-dependent ribosomal translocation step during translation elongation. During this step, the ribosome changes from the pre-translocational (PRE) to the post-translocational (POST) state as the newly formed A-site-bound peptidyl-tRNA and P-site-bound deacylated tRNA move to the P and E sites, respectively. Catalyzes the coordinated movement of the two tRNA molecules, the mRNA and conformational changes in the ribosome. In Arachis hypogaea (Peanut), this protein is Elongation factor G, chloroplastic.